Here is a 461-residue protein sequence, read N- to C-terminus: 3-oxoacyl-[acyl-carrier-protein] synthase, mitochondrial (461 aa).

Residues 1-28 (MATSNLRRHLSASRLRLNRFISTSSSYH) constitute a mitochondrion transit peptide. Residues 30–460 (HRRVVVTGLG…GTNASLLFAS (431 aa)) enclose the Ketosynthase family 3 (KS3) domain. Active-site for beta-ketoacyl synthase activity residues include Cys209, His350, and His389.

It belongs to the thiolase-like superfamily. Beta-ketoacyl-ACP synthases family. Homodimer. Expressed at the same level in leaves, roots, siliques and flowers.

The protein localises to the mitochondrion. The enzyme catalyses a fatty acyl-[ACP] + malonyl-[ACP] + H(+) = a 3-oxoacyl-[ACP] + holo-[ACP] + CO2. It carries out the reaction butanoyl-[ACP] + malonyl-[ACP] + H(+) = 3-oxohexanoyl-[ACP] + holo-[ACP] + CO2. It catalyses the reaction hexanoyl-[ACP] + malonyl-[ACP] + H(+) = 3-oxooctanoyl-[ACP] + holo-[ACP] + CO2. The catalysed reaction is octanoyl-[ACP] + malonyl-[ACP] + H(+) = 3-oxodecanoyl-[ACP] + holo-[ACP] + CO2. The enzyme catalyses decanoyl-[ACP] + malonyl-[ACP] + H(+) = 3-oxododecanoyl-[ACP] + holo-[ACP] + CO2. It carries out the reaction dodecanoyl-[ACP] + malonyl-[ACP] + H(+) = 3-oxotetradecanoyl-[ACP] + holo-[ACP] + CO2. It catalyses the reaction tetradecanoyl-[ACP] + malonyl-[ACP] + H(+) = 3-oxohexadecanoyl-[ACP] + holo-[ACP] + CO2. The catalysed reaction is hexadecanoyl-[ACP] + malonyl-[ACP] + H(+) = 3-oxooctadecanoyl-[ACP] + holo-[ACP] + CO2. The protein operates within lipid metabolism; fatty acid biosynthesis. With respect to regulation, inhibited by cerulenin. Catalyzes all the condensation reaction of fatty acid synthesis by the addition to an acyl acceptor of two carbons from malonyl-ACP. Able to elongate saturated acyl chains from 4 to at least 16 carbons. Uses malonyl-CoA but not acetyl-CoA as primer substrate. When expressed in a heterologous system, reveals a bimodal distribution of products, with peaks at C8 and C14-C16. The major product of the reaction (octanoyl-ACP) is required for the lipoylation of essential mitochondrial proteins. Required for mitochondrial fatty acid synthesis (mtFAS). MtFAS are essential for photorespiration and plant development, probably by influencing mitochondrial membrane lipid composition and other lipid metabolic pathways. The chain is 3-oxoacyl-[acyl-carrier-protein] synthase, mitochondrial from Arabidopsis thaliana (Mouse-ear cress).